Consider the following 339-residue polypeptide: MEKYEMVKDLGFGNFGLARLMRNKQTNELVAVKFIDRGYKIDENVAREIINHRALNHPNIVRFKEVVLTPTHLGIVMEYAAGGELFERISSVGRFSEAEARYFFQQLICGVHYLHALQICHRDLKLENTLLDGSPAPRLKICDFGYSKSSVLHSNPKSTVGTPAYIAPEVFCRSEYDGKSVDVWSCGVALYVMLVGAYPFEDPKDPRNFRKTVQKIMAVNYKIPGYVHISEDCRKLLSRIFVANPLHRSTLKEIKSHAWFLKNLPRELKEPAQAIYYQRNVNLINFSPQRVEEIMKIVGEARTIPNLSRPVESLGSDKKDDDEEEYLDANDEEWYDDYA.

Positions Tyr-4 to Phe-260 constitute a Protein kinase domain. ATP contacts are provided by residues Leu-10 to Ala-18 and Lys-33. The active-site Proton acceptor is the Asp-123. The interval Ser-308–Ala-339 is disordered. The segment covering Asp-320–Ala-339 has biased composition (acidic residues).

It belongs to the protein kinase superfamily. Ser/Thr protein kinase family. As to expression, expressed in seedlings.

It carries out the reaction L-seryl-[protein] + ATP = O-phospho-L-seryl-[protein] + ADP + H(+). It catalyses the reaction L-threonyl-[protein] + ATP = O-phospho-L-threonyl-[protein] + ADP + H(+). The chain is Serine/threonine-protein kinase SRK2J (SRK2J) from Arabidopsis thaliana (Mouse-ear cress).